The following is a 27-amino-acid chain: Urumin (27 aa).

As to expression, expressed by the skin glands.

The protein localises to the secreted. Its function is as follows. Amphibian peptide that shows viricidal activity against human H1N1 influenza A virus. It specifically targets the conserved stalk region of H1 hemagglutinin, and acts by actively destroying influenza virions. It shows a reduced activity on human H3N2 influenza A virus and no activity against other viruses (HIV, SIV, HSV-II, hepatitis C, Ebola, Zika, and Dengue viruses). In vivo, the peptide also protects mice infected with mouse-adapted influenza virus from lethal influenza infection. The peptide synthesized in D-amino acids is inactive. The chain is Urumin from Hydrophylax bahuvistara (Wide-spread fungoid frog).